A 107-amino-acid chain; its full sequence is Iron-binding protein IscA (107 aa).

Positions 35, 99, and 101 each coordinate Fe cation.

The protein belongs to the HesB/IscA family. As to quaternary structure, homodimer; may form tetramers and higher multimers. The cofactor is Fe cation.

Is able to transfer iron-sulfur clusters to apo-ferredoxin. Multiple cycles of [2Fe2S] cluster formation and transfer are observed, suggesting that IscA acts catalytically. Recruits intracellular free iron so as to provide iron for the assembly of transient iron-sulfur cluster in IscU in the presence of IscS, L-cysteine and the thioredoxin reductase system TrxA/TrxB. This chain is Iron-binding protein IscA, found in Photorhabdus laumondii subsp. laumondii (strain DSM 15139 / CIP 105565 / TT01) (Photorhabdus luminescens subsp. laumondii).